Reading from the N-terminus, the 201-residue chain is Putative toxin HigB2 (201 aa).

It belongs to the mycobacterial HigB family.

Its function is as follows. Putative toxic component of a type II toxin-antitoxin (TA) system. Its cognate antitoxin would be HigA2. The polypeptide is Putative toxin HigB2 (Mycobacterium tuberculosis (strain ATCC 25618 / H37Rv)).